The chain runs to 513 residues: GMP synthase [glutamine-hydrolyzing] (513 aa).

In terms of domain architecture, Glutamine amidotransferase type-1 spans 3–200 (SVLVLDFGSQ…LINIAGIRPD (198 aa)). Cys80 serves as the catalytic Nucleophile. Catalysis depends on residues His174 and Glu176. Positions 201-388 (WSSKSFIEHQ…LGIPEDILMR (188 aa)) constitute a GMPS ATP-PPase domain. An ATP-binding site is contributed by 228–234 (SGGVDST).

As to quaternary structure, homodimer.

The catalysed reaction is XMP + L-glutamine + ATP + H2O = GMP + L-glutamate + AMP + diphosphate + 2 H(+). The protein operates within purine metabolism; GMP biosynthesis; GMP from XMP (L-Gln route): step 1/1. Functionally, catalyzes the synthesis of GMP from XMP. This is GMP synthase [glutamine-hydrolyzing] from Chlorobium luteolum (strain DSM 273 / BCRC 81028 / 2530) (Pelodictyon luteolum).